The following is a 166-amino-acid chain: Cyanate hydratase (166 aa).

Residues arginine 92, glutamate 95, and serine 118 contribute to the active site.

Belongs to the cyanase family.

The enzyme catalyses cyanate + hydrogencarbonate + 3 H(+) = NH4(+) + 2 CO2. In terms of biological role, catalyzes the reaction of cyanate with bicarbonate to produce ammonia and carbon dioxide. This Zea mays (Maize) protein is Cyanate hydratase.